We begin with the raw amino-acid sequence, 459 residues long: Glutamyl-tRNA reductase (459 aa).

Residues 49 to 52, serine 109, 114 to 116, and glutamine 120 each bind substrate; these read TCNR and EQQ. Cysteine 50 functions as the Nucleophile in the catalytic mechanism. 189 to 194 is a binding site for NADP(+); the sequence is GAGAMG.

It belongs to the glutamyl-tRNA reductase family. Homodimer.

The enzyme catalyses (S)-4-amino-5-oxopentanoate + tRNA(Glu) + NADP(+) = L-glutamyl-tRNA(Glu) + NADPH + H(+). It participates in porphyrin-containing compound metabolism; protoporphyrin-IX biosynthesis; 5-aminolevulinate from L-glutamyl-tRNA(Glu): step 1/2. Catalyzes the NADPH-dependent reduction of glutamyl-tRNA(Glu) to glutamate 1-semialdehyde (GSA). The chain is Glutamyl-tRNA reductase from Mycolicibacterium paratuberculosis (strain ATCC BAA-968 / K-10) (Mycobacterium paratuberculosis).